The primary structure comprises 415 residues: DNA polymerase IV (415 aa).

Residues 15-196 form the UmuC domain; that stretch reads ILHVDMNCFF…LPVGAMHGIG (182 aa). Mg(2+) contacts are provided by D19 and D115. Residue E116 is part of the active site. The segment at 238–260 is disordered; the sequence is KGMDDRQVDPSQMGQHKSVGNSM. Residues 246–260 show a composition bias toward polar residues; sequence DPSQMGQHKSVGNSM.

The protein belongs to the DNA polymerase type-Y family. In terms of assembly, monomer. Mg(2+) is required as a cofactor.

Its subcellular location is the cytoplasm. It catalyses the reaction DNA(n) + a 2'-deoxyribonucleoside 5'-triphosphate = DNA(n+1) + diphosphate. Poorly processive, error-prone DNA polymerase involved in untargeted mutagenesis. Copies undamaged DNA at stalled replication forks, which arise in vivo from mismatched or misaligned primer ends. These misaligned primers can be extended by PolIV. Exhibits no 3'-5' exonuclease (proofreading) activity. May be involved in translesional synthesis, in conjunction with the beta clamp from PolIII. This is DNA polymerase IV from Bacillus cereus (strain ZK / E33L).